The primary structure comprises 676 residues: MSSLQALCSGLPLRPLPENRGRQAGVPHAPVRTPSLSPVEKQLALRNALRYFPPDVQELLAPEFAQELQLYGHIYMYRFCPDIEMRAYPIEQYPCQTKVAAAIMHMIMNNLDPAVAQFPQELVTYGGNGQVFSNWAQFWLTMFYLSKMTEEQTLVMYSGHPLGLFPSSRSAPRLVITNGMVIPNYSSRTEYEKLFALGVTMYGQMTAGSYCYIGPQGIVHGTVLTVLNAARRYLGIEDLAGKVFVTSGLGGMSGAQAKAAVIVGCIGVIAEVDKAALEKRHRQGWLMEVTDSLDRCIQRLREARKKKEVLSLGYHGNVVALWERLVHELDTTGECLVDLGSDQTSCHNPFNGGYYPVQLSFTEAQSLMASNPAVFKDLVQESLRRQVSAINRLAEEKFFFWDYGNAFLLEAQRAGADVEKKGAGRTEFRYPSYVQHIMGDIFSQGFGPFRWVCTSGDPQDLAVTDELATSVLEEAIADGVKVSVKLQYMDNIRWIREAARHRLVVGSQARILYSDQKGRVAIAVAINQAIACRRIKAPVVLSRDHHDVSGTDSPFRETSNIYDGSAFCADMAVQNFVGDACRGATWVALHNGGGVGWGEVINGGFGLVLDGTPEAEGRARLMLSWDVSNGVARRCWSGNQKAYEIICQTMQENSTLVVTLPHKVEDERVLQQALQL.

Residues 15-35 form a disordered region; that stretch reads PLPENRGRQAGVPHAPVRTPS. NAD(+) is bound by residues 126–127, glutamine 204, 251–253, glutamate 271, 317–318, 343–347, 354–355, tyrosine 403, and glycine 594; these read GG, GMS, NV, QTSCH, and YY.

It belongs to the urocanase family. It depends on NAD(+) as a cofactor.

It catalyses the reaction 4-imidazolone-5-propanoate = trans-urocanate + H2O. It participates in amino-acid degradation; L-histidine degradation into L-glutamate; N-formimidoyl-L-glutamate from L-histidine: step 2/3. This is Urocanate hydratase (UROC1) from Homo sapiens (Human).